Consider the following 405-residue polypeptide: Acetate kinase (405 aa).

Asn7 provides a ligand contact to Mg(2+). Lys14 serves as a coordination point for ATP. Position 98 (Arg98) interacts with substrate. The Proton donor/acceptor role is filled by Asp155. ATP contacts are provided by residues 215-219, 289-291, and 337-341; these read HLGNG, DMR, and GIGEN. Glu391 is a Mg(2+) binding site.

It belongs to the acetokinase family. As to quaternary structure, homodimer. Requires Mg(2+) as cofactor. It depends on Mn(2+) as a cofactor.

The protein localises to the cytoplasm. The enzyme catalyses acetate + ATP = acetyl phosphate + ADP. The protein operates within metabolic intermediate biosynthesis; acetyl-CoA biosynthesis; acetyl-CoA from acetate: step 1/2. Catalyzes the formation of acetyl phosphate from acetate and ATP. Can also catalyze the reverse reaction. In Desulfotalea psychrophila (strain LSv54 / DSM 12343), this protein is Acetate kinase.